Reading from the N-terminus, the 689-residue chain is Transcription factor BHLH42 (689 aa).

2 disordered regions span residues 192-287 (IDHH…NPRV) and 458-489 (DDNN…ANHV). The segment covering 206-217 (EHSTSNLATSSV) has biased composition (polar residues). Acidic residues predominate over residues 246–271 (EEQEQEQEEDEDDDDDDDDEEEAESD). A basic motif region spans residues 483 to 496 (ELSANHVLAERRRR). Residues 483-532 (ELSANHVLAERRRREKLNERFIILRSLVPFVTKMDKASILGDTIEYVKQL) enclose the bHLH domain. Positions 497–532 (EKLNERFIILRSLVPFVTKMDKASILGDTIEYVKQL) are helix-loop-helix motif. A disordered region spans residues 547–570 (EIDQRSRSSGDPQRSGAKAATDKR).

This sequence belongs to the bHLH protein family. In terms of assembly, interacts with MYB123. In terms of tissue distribution, expressed in the inner pericarp of maturing fruits.

It is found in the nucleus. Functionally, transcription activator involved in the spatiotemporal regulation of anthocyanin biosynthesis specifically in the inner pericarp of red-fleshed kiwifruits. Functions in association with MYB123 to activate the promoters of LDOX (ANS) and F3GT1 that encode the dedicated enzymes for anthocyanin biosynthesis. The protein is Transcription factor BHLH42 of Actinidia chinensis var. chinensis (Chinese soft-hair kiwi).